The following is a 491-amino-acid chain: Serine/threonine-protein phosphatase 2A regulatory subunit B'' subunit delta (491 aa).

One can recognise an EF-hand domain in the interval T331 to R366. The Ca(2+) site is built by D344, D346, D348, and E355. Composition is skewed to acidic residues over residues A460–D473 and A481–L491. A disordered region spans residues A460–L491.

As to quaternary structure, PP2A consists of a common heterodimeric core enzyme, composed of a 36 kDa catalytic subunit (subunit C) and a 65 kDa constant regulatory subunit (PR65 or subunit A), that associates with a variety of regulatory subunits. Proteins that associate with the core dimer include three families of regulatory subunits B (the R2/B/PR55/B55, R3/B''/PR72/PR130/PR59 and R5/B'/B56 families), the 48 kDa variable regulatory subunit, viral proteins, and cell signaling molecules. Expressed in testis, kidney, liver, lung, spleen, brain and heart.

Its function is as follows. The B regulatory subunit might modulate substrate selectivity and catalytic activity, and might also direct the localization of the catalytic enzyme to a particular subcellular compartment. Interacts with retinoblastoma-related protein p107 (in vivo). May target PP2A core dimer to p107 resulting in dephosphorylation of p107. This chain is Serine/threonine-protein phosphatase 2A regulatory subunit B'' subunit delta (Ppp2r3d), found in Mus musculus (Mouse).